A 66-amino-acid polypeptide reads, in one-letter code: Large ribosomal subunit protein bL33 (66 aa).

The protein belongs to the bacterial ribosomal protein bL33 family.

The protein is Large ribosomal subunit protein bL33 of Wolbachia pipientis wMel.